Consider the following 546-residue polypeptide: Glutamyl-tRNA(Gln) amidotransferase subunit A, chloroplastic/mitochondrial (546 aa).

The segment at 21-52 (KRRRFHSSTPLFLSQPQTLASTDPPSSPPQSQ) is disordered. The segment covering 27 to 43 (SSTPLFLSQPQTLASTD) has biased composition (polar residues). Residues Lys123 and Ser198 each act as charge relay system in the active site. Residue Ser222 is the Acyl-ester intermediate of the active site.

This sequence belongs to the amidase family. GatA subfamily. Subunit of the heterotrimeric GatCAB amidotransferase (AdT) complex, composed of A, B and C subunits.

It is found in the mitochondrion. The protein resides in the plastid. The protein localises to the chloroplast stroma. The enzyme catalyses L-glutamyl-tRNA(Gln) + L-glutamine + ATP + H2O = L-glutaminyl-tRNA(Gln) + L-glutamate + ADP + phosphate + H(+). Allows the formation of correctly charged Gln-tRNA(Gln) through the transamidation of misacylated Glu-tRNA(Gln) in chloroplasts and mitochondria. The reaction takes place in the presence of glutamine and ATP through an activated gamma-phospho-Glu-tRNA(Gln). The chain is Glutamyl-tRNA(Gln) amidotransferase subunit A, chloroplastic/mitochondrial from Vitis vinifera (Grape).